A 321-amino-acid chain; its full sequence is MATGTQQKENTLLHLFAGGCGGTVGAIFTCPLEVIKTRLQSSRLALRTVYYPQVHLGTISGAGVVRQTSVTPGLLQVLKSILEKEGPRSLFRGLGPNLVGVAPSRAVYFACYSKAKEQFNGVFVPNSNIVHVFSAGSAAFVTNSLMNPIWMVKTRMQLERKVRGSKQMNTLQCARYVYQTEGIRGFYRGLTASYAGISETIICFAIYESLKKYLKEAPLASSTNGTEKNSTNFFGLMAAAALSKGCASCVAYPHEVIRTRLREEGSKYKSFVQTARLVFREEGYLAFYRGLFAQLIRQIPNTAIVLSTYELIVYLLEDHAQ.

Solcar repeat units lie at residues Glu9–Gln118, Asn126–Tyr213, and Thr231–Leu315. 6 helical membrane passes run Leu12 to Leu32, Val49 to Val65, Gly121 to Val141, Leu190 to Leu210, Phe233 to Pro253, and Gln298 to Asp318.

It belongs to the mitochondrial carrier (TC 2.A.29) family.

The protein resides in the mitochondrion inner membrane. The catalysed reaction is UTP(in) + UDP(out) = UTP(out) + UDP(in). The enzyme catalyses dUTP(out) + UTP(in) = dUTP(in) + UTP(out). It carries out the reaction 5-methyl-UTP(out) + UTP(in) = 5-methyl-UTP(in) + UTP(out). It catalyses the reaction 5-methyl-UDP(out) + UTP(in) = 5-methyl-UDP(in) + UTP(out). The catalysed reaction is UTP(in) + CTP(out) = UTP(out) + CTP(in). The enzyme catalyses CDP(out) + UTP(in) = CDP(in) + UTP(out). It carries out the reaction dCTP(out) + UTP(in) = dCTP(in) + UTP(out). It catalyses the reaction dCDP(out) + UTP(in) = dCDP(in) + UTP(out). The catalysed reaction is UTP(in) + GTP(out) = UTP(out) + GTP(in). The enzyme catalyses UTP(in) + GDP(out) = UTP(out) + GDP(in). It carries out the reaction dGTP(out) + UTP(in) = dGTP(in) + UTP(out). It catalyses the reaction dGDP(out) + UTP(in) = dGDP(in) + UTP(out). The catalysed reaction is ITP(out) + UTP(in) = ITP(in) + UTP(out). In terms of biological role, mitochondrial transporter that imports/exports pyrimidine nucleotides into and from mitochondria. Selectively transports uridine, thymidine, guanosine, cytosine and inosine (deoxy)nucleoside di- and triphosphates by an antiport mechanism. May import (deoxy)nucleoside triphosphates in exchange for intramitochondrial (deoxy)nucleoside diphosphates, thus providing precursors necessary for de novo synthesis of mitochondrial DNA and RNA while exporting products of their catabolism. Participates in mitochondrial genome maintenance, regulation of mitochondrial membrane potential and mitochondrial respiration. Upon INS or IGF1 stimulation regulates cell growth and proliferation by controlling mitochondrial DNA replication and transcription, the ratio of mitochondria-to nuclear-encoded components of the electron transport chain resulting in control of mitochondrial ROS production. Participates in dendritic cell endocytosis and may associate with mitochondrial oxidative phosphorylation. This Bos taurus (Bovine) protein is Solute carrier family 25 member 33 (SLC25A33).